A 236-amino-acid polypeptide reads, in one-letter code: THO complex subunit 7B (236 aa).

Positions 99–228 (EANLREKESF…IRSASEDQRN (130 aa)) form a coiled coil.

Belongs to the THOC7 family. In terms of assembly, component of the THO complex, which is composed of THO1, THO2, THO3, THO5, THO6 and THO7.

The protein localises to the nucleus. Functionally, acts as a component of the THO subcomplex of the TREX complex which is thought to couple mRNA transcription, processing and nuclear export. The sequence is that of THO complex subunit 7B (THO7B) from Arabidopsis thaliana (Mouse-ear cress).